The following is a 262-amino-acid chain: Acyl-[acyl-carrier-protein]--UDP-N-acetylglucosamine O-acyltransferase (262 aa).

This sequence belongs to the transferase hexapeptide repeat family. LpxA subfamily. Homotrimer.

The protein resides in the cytoplasm. It carries out the reaction a (3R)-hydroxyacyl-[ACP] + UDP-N-acetyl-alpha-D-glucosamine = a UDP-3-O-[(3R)-3-hydroxyacyl]-N-acetyl-alpha-D-glucosamine + holo-[ACP]. It participates in glycolipid biosynthesis; lipid IV(A) biosynthesis; lipid IV(A) from (3R)-3-hydroxytetradecanoyl-[acyl-carrier-protein] and UDP-N-acetyl-alpha-D-glucosamine: step 1/6. Involved in the biosynthesis of lipid A, a phosphorylated glycolipid that anchors the lipopolysaccharide to the outer membrane of the cell. The polypeptide is Acyl-[acyl-carrier-protein]--UDP-N-acetylglucosamine O-acyltransferase (Verminephrobacter eiseniae (strain EF01-2)).